A 157-amino-acid polypeptide reads, in one-letter code: MRILGIDPGSRKCGYAIISHTSNKLSLITAGFINITTTRLQEQILDLIEALDCLLDRYEVHEVAIEDIFFAYNPKSVIKLAQFRGALSLKILERIGNFSEYTPLQVKKALTGNGKAAKEQVAFMVKRLLNITSEIKPLDISDAIAVAITHAQRLKLH.

Active-site residues include Asp-7, Glu-66, and Asp-139. Residues Asp-7, Glu-66, and Asp-139 each coordinate Mg(2+).

This sequence belongs to the RuvC family. Homodimer which binds Holliday junction (HJ) DNA. The HJ becomes 2-fold symmetrical on binding to RuvC with unstacked arms; it has a different conformation from HJ DNA in complex with RuvA. In the full resolvosome a probable DNA-RuvA(4)-RuvB(12)-RuvC(2) complex forms which resolves the HJ. Mg(2+) serves as cofactor.

It is found in the cytoplasm. The enzyme catalyses Endonucleolytic cleavage at a junction such as a reciprocal single-stranded crossover between two homologous DNA duplexes (Holliday junction).. Functionally, the RuvA-RuvB-RuvC complex processes Holliday junction (HJ) DNA during genetic recombination and DNA repair. Endonuclease that resolves HJ intermediates. Cleaves cruciform DNA by making single-stranded nicks across the HJ at symmetrical positions within the homologous arms, yielding a 5'-phosphate and a 3'-hydroxyl group; requires a central core of homology in the junction. The consensus cleavage sequence is 5'-(A/T)TT(C/G)-3'. Cleavage occurs on the 3'-side of the TT dinucleotide at the point of strand exchange. HJ branch migration catalyzed by RuvA-RuvB allows RuvC to scan DNA until it finds its consensus sequence, where it cleaves and resolves the cruciform DNA. The protein is Crossover junction endodeoxyribonuclease RuvC of Helicobacter pylori (strain P12).